Reading from the N-terminus, the 509-residue chain is Bifunctional purine biosynthesis protein PurH (509 aa).

The 144-residue stretch at 1-144 folds into the MGS-like domain; sequence MKRALISVSD…KNYAAVTVVV (144 aa).

It belongs to the PurH family.

It carries out the reaction (6R)-10-formyltetrahydrofolate + 5-amino-1-(5-phospho-beta-D-ribosyl)imidazole-4-carboxamide = 5-formamido-1-(5-phospho-D-ribosyl)imidazole-4-carboxamide + (6S)-5,6,7,8-tetrahydrofolate. The catalysed reaction is IMP + H2O = 5-formamido-1-(5-phospho-D-ribosyl)imidazole-4-carboxamide. Its pathway is purine metabolism; IMP biosynthesis via de novo pathway; 5-formamido-1-(5-phospho-D-ribosyl)imidazole-4-carboxamide from 5-amino-1-(5-phospho-D-ribosyl)imidazole-4-carboxamide (10-formyl THF route): step 1/1. The protein operates within purine metabolism; IMP biosynthesis via de novo pathway; IMP from 5-formamido-1-(5-phospho-D-ribosyl)imidazole-4-carboxamide: step 1/1. In Listeria monocytogenes serotype 4b (strain F2365), this protein is Bifunctional purine biosynthesis protein PurH.